The chain runs to 183 residues: Shikimate kinase (183 aa).

Position 18–23 (18–23 (GVGKTT)) interacts with ATP. A Mg(2+)-binding site is contributed by Thr-22. Positions 40, 64, and 86 each coordinate substrate. Arg-125 contacts ATP. Arg-143 provides a ligand contact to substrate.

This sequence belongs to the shikimate kinase family. In terms of assembly, monomer. Mg(2+) serves as cofactor.

The protein localises to the cytoplasm. It carries out the reaction shikimate + ATP = 3-phosphoshikimate + ADP + H(+). It functions in the pathway metabolic intermediate biosynthesis; chorismate biosynthesis; chorismate from D-erythrose 4-phosphate and phosphoenolpyruvate: step 5/7. In terms of biological role, catalyzes the specific phosphorylation of the 3-hydroxyl group of shikimic acid using ATP as a cosubstrate. This chain is Shikimate kinase, found in Oceanobacillus iheyensis (strain DSM 14371 / CIP 107618 / JCM 11309 / KCTC 3954 / HTE831).